Here is a 130-residue protein sequence, read N- to C-terminus: Small ribosomal subunit protein uS8 (130 aa).

This sequence belongs to the universal ribosomal protein uS8 family. As to quaternary structure, part of the 30S ribosomal subunit. Contacts proteins S5 and S12.

One of the primary rRNA binding proteins, it binds directly to 16S rRNA central domain where it helps coordinate assembly of the platform of the 30S subunit. This chain is Small ribosomal subunit protein uS8, found in Mannheimia succiniciproducens (strain KCTC 0769BP / MBEL55E).